The sequence spans 451 residues: Proton-coupled amino acid transporter-like protein acs (451 aa).

Topologically, residues 1-48 are cytoplasmic; sequence MNDDIKTVTVYPTTLELTTPTKSANGSNDDYDPHQHRELKNPTTNFQT. Residues 49 to 69 form a helical membrane-spanning segment; it reads FAHFLKASVGTGVLAMPSAFA. Residues 70–80 lie on the Extracellular side of the membrane; sequence HAGYVNGTLLT. N-linked (GlcNAc...) asparagine glycosylation is present at N75. The chain crosses the membrane as a helical span at residues 81-101; it reads LIIGSLALYCLHILIKCMYIL. At 102-136 the chain is on the cytoplasmic side; sequence CKRQRVPYVSFSQAMNLGLKQGPPWLRCLAPIAVP. The chain crosses the membrane as a helical span at residues 137-157; the sequence is FVDGFLAFYHFGICCVYVVFI. At 158–167 the chain is on the extracellular side; the sequence is AESIKQLVDE. A helical membrane pass occupies residues 168–188; it reads YLVVWDVRIHMCIIIVPLLLI. Residues 189 to 199 are Cytoplasmic-facing; that stretch reads YSIKNLKLLAP. A helical transmembrane segment spans residues 200 to 220; that stretch reads FSSAANLLLLVGFGIILYYIF. Residues 221–237 are Extracellular-facing; it reads EELPPLSERDPFVAAGK. The chain crosses the membrane as a helical span at residues 238–258; that stretch reads LPTFFGTVLFALEAVGVILAI. The Cytoplasmic portion of the chain corresponds to 259–272; sequence EENMATPKSFVGPC. The helical transmembrane segment at 273 to 293 threads the bilayer; sequence GILNSGMSIVLGLYVLLGFFG. Residues 294–320 lie on the Extracellular side of the membrane; that stretch reads YWKYGNESEGSITLNIPQSEIPAQVVK. N-linked (GlcNAc...) asparagine glycosylation is present at N299. Residues 321–341 traverse the membrane as a helical segment; the sequence is VFFAITTWISYALQGYVTAHI. Topologically, residues 342 to 357 are cytoplasmic; the sequence is LWDKYLAKRFKETRQT. A helical membrane pass occupies residues 358 to 378; sequence FYELIFRAIIVLLTFGCAVAI. Residues 379–382 are Extracellular-facing; it reads PDLS. The helical transmembrane segment at 383-403 threads the bilayer; that stretch reads VFLSLVGSFCLSILGLIFPVL. Over 404–420 the chain is Cytoplasmic; sequence LQICVQYTEGYGPFRIK. Residues 421–441 traverse the membrane as a helical segment; that stretch reads LIINLLLLCFGIFGGVVGTYV. At 442 to 451 the chain is on the extracellular side; the sequence is SILDIIAVYK.

It belongs to the amino acid/polyamine transporter 2 family. Expressed in the proximal and distal regions of the midgut; expressed in enterocytes and progenitor cells. Expression increases in response to intestinal bacterial infection and spreads further into the midgut, eventually covering the entire midgut.

Its subcellular location is the cell membrane. The protein localises to the late endosome membrane. It localises to the lysosome membrane. It is found in the basal cell membrane. Amino acid transporter which has pH-dependent electrogenic transport activity for alanine, glycine and proline. Plays a role in positive regulation of growth by directly or indirectly modulating the effects of the TOR signaling pathway. Required in enterocytes for the efficient recovery of gut epithelium following the cytoplasmic purge response to bacterial infection. Acts cell-autonomously to promote the retrograde transport of amino acids into the intestinal epithelium. Acts non-cell-autonomously through the insulin signaling pathway to stimulate Myc expression and the release of amino acids from nutrient stores into the hemolymph. The protein is Proton-coupled amino acid transporter-like protein acs of Drosophila melanogaster (Fruit fly).